We begin with the raw amino-acid sequence, 908 residues long: PTS system glucose-specific EIICBA component (908 aa).

The 264-residue stretch at 1–264 folds into the PTS EIIC type-1; first part domain; the sequence is MQISLVKIRN…YAPLWYTSAG (264 aa). 5 consecutive transmembrane segments (helical) span residues 31 to 51, 71 to 91, 100 to 120, 155 to 175, and 189 to 209; these read LMIP…GDAI, GGNV…AITF, FSAF…IIPV, VFGG…FYAI, and FVPI…LMVW. The interval 265 to 450 is unknown; sequence GSLQEIANQQ…VSQFTVAVPS (186 aa). Positions 451-602 constitute a PTS EIIC type-1; second part domain; it reads LNPAQYSQGK…FNLATPGRGG (152 aa). The next 5 helical transmembrane spans lie at 459 to 479, 487 to 507, 509 to 529, 536 to 556, and 571 to 591; these read GKFP…ILAA, ASSI…TEPF, FTFL…LAAV, LLSA…ILYG, and VPII…FLTI. In terms of domain architecture, PTS EIIB type-1 spans 631–713; the sequence is QIEAGMLLRA…QDIIQGKVNW (83 aa). Cys653 (phosphocysteine intermediate; for EIIB activity) is an active-site residue. One can recognise a PTS EIIA type-1 domain in the interval 762-875; sequence DDTFKNRLVG…DPITPFIVMQ (114 aa). His815 serves as the catalytic Tele-phosphohistidine intermediate; for EIIA activity.

It is found in the cell membrane. The catalysed reaction is N(pros)-phospho-L-histidyl-[protein] + D-glucose(out) = D-glucose 6-phosphate(in) + L-histidyl-[protein]. Functionally, the phosphoenolpyruvate-dependent sugar phosphotransferase system (sugar PTS), a major carbohydrate active transport system, catalyzes the phosphorylation of incoming sugar substrates concomitantly with their translocation across the cell membrane. This system is involved in glucose transport. The chain is PTS system glucose-specific EIICBA component (ptsG) from Mycoplasma genitalium (strain ATCC 33530 / DSM 19775 / NCTC 10195 / G37) (Mycoplasmoides genitalium).